The sequence spans 509 residues: Cytochrome P450 monooxygenase FUP2 (509 aa).

2 helical membrane passes run 16–36 (FGLALVISALALVSVIIYGCF) and 224–244 (MVEALSFFLTLPGIASVFGIA). C450 contributes to the heme binding site.

This sequence belongs to the cytochrome P450 family. Requires heme as cofactor.

It localises to the membrane. It functions in the pathway secondary metabolite biosynthesis. Its function is as follows. Cytochrome P450 monooxygenase; part of the gene cluster that mediates the biosynthesis of the mycotoxin fusaproliferin (FUP) that belongs to the class of bicyclic sesterterpenoids. FUP2 introduces a hydroxyl group at the C-24 position resulting in the formation of preterpestacin IIa, which can be further oxidized. The oxidation of the hydroxyl group at C-24 to an aldehyde and further to a carboxylic group takes place via unspecific alcohol and aldehyde dehydrogenases and leads to the shunt products preterpestacin IIc and preterpestacin IIb, respectively. The FUP biosynthetic pathway starts with the enzyme encoded by FUP1 that combines a C-terminal prenyltransferase domain responsible for the synthesis of geranylgeranyl diphosphate with the N-terminal terpene cyclase domain, to yield preterpestacin I. Preterpestacin I is then decorated by oxygenation steps that are catalyzed by two cytochrome P450 monooxygenases. First, FUP2 introduces a hydroxyl group at the C-24 position resulting in the formation of preterpestacin IIa. The second P450 monooxygenase catalyzes the hydroxylation at C-16 and C-17 of preterpestacin IIa, producing preterpestacin III. Subsequently, the FAD-dependent oxidoreductase FUP4 catalyzes the oxidation of the hydroxy group at the C-16 position to a keto group, leading to the formation of (-)-terpestacin, which is the immediate precursor of FUP. The final step in the proposed biosynthetic pathway is the addition of an acetyl group at the C-24 position of terpestacin, which is catalyzed by the acetyltransferase FUP5. The protein is Cytochrome P450 monooxygenase FUP2 of Fusarium proliferatum (strain ET1) (Orchid endophyte fungus).